A 359-amino-acid chain; its full sequence is MQAATVVINRRALRHNLQRLRELAPASKMVAVVKANAYGHGLLETARTLPDADAFGVARLEEALRLRAGGITKPVLLLEGFFDARDLPTISAQHFHTAVHNEEQLAALEEASLDEPVTVWMKLDTGMHRLGVRPEQAGAFYHRLTQCKNVRQPVNIVSHFARADEPKCGATEKQLAIFNTFCEGKPGQRSIAASGGILLWPQSHFDWVRPGIILYGVSPLEDRSTGADFGCQPVMSLTSSLIAVREHKAGEPVGYGGTWVSERDTRLGVVAMGYGDGYPRAAPSGTPVLVNGREVPIVGRVAMDMICVDLGPQAQDKAGDPVILWGEGLPVERIAEMTKVSAYELITRLTSRVAMKYVD.

Lys-34 functions as the Proton acceptor; specific for D-alanine in the catalytic mechanism. At Lys-34 the chain carries N6-(pyridoxal phosphate)lysine. Arg-129 provides a ligand contact to substrate. The active-site Proton acceptor; specific for L-alanine is Tyr-255. Substrate is bound at residue Met-303.

This sequence belongs to the alanine racemase family. Monomer but homodimer in the presence of the substrate. Requires pyridoxal 5'-phosphate as cofactor.

The catalysed reaction is L-alanine = D-alanine. It functions in the pathway amino-acid biosynthesis; D-alanine biosynthesis; D-alanine from L-alanine: step 1/1. The protein operates within cell wall biogenesis; peptidoglycan biosynthesis. Its function is as follows. Catalyzes the interconversion of L-alanine and D-alanine. The sequence is that of Alanine racemase, biosynthetic (alr) from Shigella dysenteriae.